A 142-amino-acid chain; its full sequence is Large ribosomal subunit protein uL11 (142 aa).

This sequence belongs to the universal ribosomal protein uL11 family. As to quaternary structure, part of the ribosomal stalk of the 50S ribosomal subunit. Interacts with L10 and the large rRNA to form the base of the stalk. L10 forms an elongated spine to which L12 dimers bind in a sequential fashion forming a multimeric L10(L12)X complex. In terms of processing, one or more lysine residues are methylated.

In terms of biological role, forms part of the ribosomal stalk which helps the ribosome interact with GTP-bound translation factors. This Pectobacterium carotovorum subsp. carotovorum (strain PC1) protein is Large ribosomal subunit protein uL11.